A 693-amino-acid chain; its full sequence is MQNIDLISEKEAKKLLEELADKIAMYNHAYYIEDNPLVSDSEYDQLFNLNLKLENTFPHLVLSNSPSKKIGAKITNKFAKVIHQAPMLSLSNAFDEEDIRDFLERIKNFLRINEFTPIFCEPKIDGLSFSAIYKHGLFITGATRGDGYVGEDITINIKTIKNFPHKIDNAPEFLEVRGEIYIEKQDFVNLNKEQEAQNRGKFANPRNAAAGSIRQLDVAITAQRPLKYFIYSGGVTEKNLASTQEQLLAKLKALSFSVNEISKLASSEEEIFAFYEYLKTNRHNLPYEIDGVVYKLNNFAMQNRMGFIARSPRFAIAHKFPAIIGQTKLLSITVQVGRTGMLTPVAELDPLEIGGVVVSRATLHNFQDIARKDVRIKDYVFLQRAGDVIPQITGVDISKRSNDTVKFDTPVFCPSCNSKLRYVSEDIIIRCDNGLNCPAQNYERICHFVSKNAMDIAGLGRKQVAFLIDKRLISNPLDIFFLKKKNETNLIRLENMDGWGKKSVANLWQNIEKSQKISLQRFIYALGIRHIGEQNAKLLAREFVSYNNFIAQMELLSKNDSDVYQKLNDLEGIGDKMLVDIIDFFYVKENIQLIKKLGAVLNIEDYKETREQNILTGKILVFTGSLKTISRVEAKEIAEKLGAKVASSVSSNTDLLIVGVNGGSKLKKAKELNIKIIDEAEWLAFIKCLEKEV.

Residues 40-44 (DSEYD), 89-90 (SL), and glutamate 121 each bind NAD(+). Lysine 123 (N6-AMP-lysine intermediate) is an active-site residue. Arginine 144, glutamate 179, lysine 295, and lysine 319 together coordinate NAD(+). Positions 413, 416, 431, and 437 each coordinate Zn(2+). Residues 610-693 (REQNILTGKI…AFIKCLEKEV (84 aa)) form the BRCT domain.

Belongs to the NAD-dependent DNA ligase family. LigA subfamily. The cofactor is Mg(2+). Mn(2+) is required as a cofactor.

It carries out the reaction NAD(+) + (deoxyribonucleotide)n-3'-hydroxyl + 5'-phospho-(deoxyribonucleotide)m = (deoxyribonucleotide)n+m + AMP + beta-nicotinamide D-nucleotide.. Functionally, DNA ligase that catalyzes the formation of phosphodiester linkages between 5'-phosphoryl and 3'-hydroxyl groups in double-stranded DNA using NAD as a coenzyme and as the energy source for the reaction. It is essential for DNA replication and repair of damaged DNA. This chain is DNA ligase, found in Rickettsia typhi (strain ATCC VR-144 / Wilmington).